A 725-amino-acid chain; its full sequence is Probable alpha-galactosidase G (725 aa).

The N-linked (GlcNAc...) asparagine glycan is linked to asparagine 407. Catalysis depends on aspartate 484, which acts as the Nucleophile. An N-linked (GlcNAc...) asparagine glycan is attached at asparagine 490. Aspartate 546 (proton donor) is an active-site residue. Asparagine 672 is a glycosylation site (N-linked (GlcNAc...) asparagine).

The protein belongs to the glycosyl hydrolase 36 family. In terms of assembly, homotetramer. The cofactor is Mg(2+). Requires NAD(+) as cofactor.

It is found in the secreted. The enzyme catalyses Hydrolysis of terminal, non-reducing alpha-D-galactose residues in alpha-D-galactosides, including galactose oligosaccharides, galactomannans and galactolipids.. Functionally, hydrolyzes a variety of simple alpha-D-galactoside as well as more complex molecules such as oligosaccharides and polysaccharides. The sequence is that of Probable alpha-galactosidase G (aglG) from Aspergillus terreus (strain NIH 2624 / FGSC A1156).